The primary structure comprises 126 residues: Holo-[acyl-carrier-protein] synthase (126 aa).

Asp8 and Glu57 together coordinate Mg(2+).

This sequence belongs to the P-Pant transferase superfamily. AcpS family. Mg(2+) is required as a cofactor.

It localises to the cytoplasm. It carries out the reaction apo-[ACP] + CoA = holo-[ACP] + adenosine 3',5'-bisphosphate + H(+). Transfers the 4'-phosphopantetheine moiety from coenzyme A to a Ser of acyl-carrier-protein. This is Holo-[acyl-carrier-protein] synthase from Vibrio cholerae serotype O1 (strain ATCC 39315 / El Tor Inaba N16961).